Here is a 279-residue protein sequence, read N- to C-terminus: HTH-type transcriptional regulator HdfR (279 aa).

The region spanning 1–58 is the HTH lysR-type domain; that stretch reads MDTELLKTFLEVSRTRHFGRAAESLYLTQSAVSFRIRQLENQLGVNLFTRHRNNIRLT. Residues 18 to 37 constitute a DNA-binding region (H-T-H motif); that stretch reads FGRAAESLYLTQSAVSFRIR.

Belongs to the LysR transcriptional regulatory family.

Negatively regulates the transcription of the flagellar master operon flhDC by binding to the upstream region of the operon. This Escherichia fergusonii (strain ATCC 35469 / DSM 13698 / CCUG 18766 / IAM 14443 / JCM 21226 / LMG 7866 / NBRC 102419 / NCTC 12128 / CDC 0568-73) protein is HTH-type transcriptional regulator HdfR.